The following is a 396-amino-acid chain: Phosphoglycerate kinase (396 aa).

Residues 21–23 (DFN), Arg36, 59–62 (HLGK), Arg119, and Arg156 each bind substrate. Residues Lys206, Glu325, and 352–355 (GGDS) each bind ATP.

Belongs to the phosphoglycerate kinase family. As to quaternary structure, monomer.

Its subcellular location is the cytoplasm. The catalysed reaction is (2R)-3-phosphoglycerate + ATP = (2R)-3-phospho-glyceroyl phosphate + ADP. It participates in carbohydrate degradation; glycolysis; pyruvate from D-glyceraldehyde 3-phosphate: step 2/5. In Staphylococcus haemolyticus (strain JCSC1435), this protein is Phosphoglycerate kinase.